We begin with the raw amino-acid sequence, 468 residues long: 3-isopropylmalate dehydratase large subunit (468 aa).

The [4Fe-4S] cluster site is built by Cys-349, Cys-409, and Cys-412.

It belongs to the aconitase/IPM isomerase family. LeuC type 1 subfamily. As to quaternary structure, heterodimer of LeuC and LeuD. [4Fe-4S] cluster is required as a cofactor.

It catalyses the reaction (2R,3S)-3-isopropylmalate = (2S)-2-isopropylmalate. It functions in the pathway amino-acid biosynthesis; L-leucine biosynthesis; L-leucine from 3-methyl-2-oxobutanoate: step 2/4. Functionally, catalyzes the isomerization between 2-isopropylmalate and 3-isopropylmalate, via the formation of 2-isopropylmaleate. The polypeptide is 3-isopropylmalate dehydratase large subunit (Nitrobacter hamburgensis (strain DSM 10229 / NCIMB 13809 / X14)).